Here is a 105-residue protein sequence, read N- to C-terminus: Small ribosomal subunit protein uS10 (105 aa).

Belongs to the universal ribosomal protein uS10 family. As to quaternary structure, part of the 30S ribosomal subunit.

Functionally, involved in the binding of tRNA to the ribosomes. This is Small ribosomal subunit protein uS10 from Phytoplasma australiense.